Reading from the N-terminus, the 1699-residue chain is MYSNNQLDNPNHSRSQYRNGDQSGIYAGSDEEFQVLVRKSDLDDVDEVLKIIAQHEREANDLLYDYPNLLSLFEKNYLSVTILNQQQQIIGAAVFNDFPQGLTGQIDFQHENFWENWIFDAFNFDESICITPFNTLWMTFFFVAKDQYKFSQEEELIICQKVFQNVYATLPQLEGILFLKRGETMEDNGAQAQISSILENIFIEVPVKDRDIIKRVRGIHLNSEVFYSPKHACQEIIEIRMAREQDHDDLAEIFNRQSEVLTAQFGEFFIADLIATQNLTRRGTRKFLNNGKAIVGQVRDKAVGLMSISTDIDYKFLAQCFELETYDNLFKPDFMEAIQNKRDDIRRENQYREEDQYQEIVKKMNEERMKSHFIGQRMTLQQHCREKEQEIVMKIDEIINNDAIQKNLTKKQVEEFLDEWLRGYELHQPSDLFYQYPHIFPNTQSIILTPRQLLIETLEFFGLPQHYMNGAGHWKDWVQKKMEEKRIAQLKRPQKKVTKRPKRQKEEDKKEDEFKPPSYFDLTPFQSAFKKFLAVNPEGRTIFRQKIEASMKVIKMMFCNENGEMKEERHVDLNDLGNELNKQKMDIAPEVCENLASFLECFGEIKYEEEIIMVNPPKEDTNQNAKIAQTKKMFASEQTESKPIPKLLKKTSFQEFFDAVYKMKEFDIMMNRLDITKSTTLKAEVSQIVKEEAQQEKAKQEKRRIERSPNPYDDYVKNLKDLDSIPEVPIDAQNAIVINLFCIDENFESRSLDFVEYAFSIFGDRDYIILTQPFTVPETTLLQQFIKIPMKKNSTFDHVLYIYHKDCLLSNTLFIRKSKLEDMQYVAPLFSNLINKQQIYDDTLEAITQTASRKVAFSVFCDQSLIGIYVVSKNVNLDYYISHFCVQDHIILKEHPMTCHTKLIHTALNPLFTKNTRFILKEILRLMNKTCMYFEVQEKTLLPDVFNELVFVRARQFPHFLKRKWDFEHDKEHFERAGDLTEVQDGKRDAFDQEQAPFSLSVITKKMMSSVKVNNNTRIVVVGASDTGISFIESLLSVKDINFTHITLLAPGGIMTMHINLPGDQLKALSTNYTLEELKNLMLDARVNVLDAKMVELDKKGKKIKLDKNAELPYDYLVNTVGLIDTELQNRRLISTGLFSSPYYQQLLDKYGRDRAQIEEGAPPIFGQHPVYGNYVQGVYSIDDPYLYEEFKKTGKKDSNIDLLTRKKRPQSITIYGRTLHTIAFISGMVNRGVHPNRIHYVIPPKVFETQVQFKNNTERLIYEDKRINDPDPFDDPSVEQKIFEFMESKGIQVHKGYNLHQIDVDEETRICQGVVFRKKADNYEEIIQQIEIKKQQILERDANSENADKGFDDTQSRDGDEENQPITLEQEIEELERNKFDDIEITSRFLVTSGLVDIDKEIFYIIHENGLVYNGRLIVKSNFQTTEKDIFCCGKICEFSQRYKRLSIGRSLRLDKYNGRELGQKLAKCLLDSLDLGYLTDQIYSLGELPNLYMPIGIGAFLPGDLFYYHIKKNDYARPSKTMEAEDNRQDIVSDNIDQKQQIGHYIKFKFDNNGIIDQVTYLGTEPVSVQSLVSFVGLSEKCLNQLDVRFKNGLIPNISEFLSENWAIGLYHEWFSEFRHITKMEMLQSENIQQILDEAAKYAQGGGFLDPEFIEKIKAKISPEIISQIQQGTLDFIRENQNHLPMYYVPPKKVNVD.

A compositionally biased stretch (polar residues) spans 1–22 (MYSNNQLDNPNHSRSQYRNGDQ). Disordered regions lie at residues 1–23 (MYSN…GDQS), 489–515 (QLKR…DEFK), and 1340–1365 (ERDA…EENQ). Residues 489–503 (QLKRPQKKVTKRPKR) are compositionally biased toward basic residues. Composition is skewed to basic and acidic residues over residues 504 to 515 (QKEEDKKEDEFK) and 1340 to 1359 (ERDA…QSRD).

It is found in the cell projection. The protein resides in the cilium. In terms of biological role, as component of a spoke-associated complex, regulates ciliary mobility by mediating a stable and functional assembly of the radial spoke 3 (RS3). This is Cilia- and flagella-associated protein 61 from Tetrahymena thermophila (strain SB210).